The following is a 261-amino-acid chain: Endonuclease NucS (261 aa).

The protein belongs to the NucS endonuclease family.

The protein resides in the cytoplasm. Cleaves both 3' and 5' ssDNA extremities of branched DNA structures. The chain is Endonuclease NucS from Aeropyrum pernix (strain ATCC 700893 / DSM 11879 / JCM 9820 / NBRC 100138 / K1).